The chain runs to 309 residues: Coenzyme PQQ synthesis protein B (309 aa).

This sequence belongs to the PqqB family.

The protein operates within cofactor biosynthesis; pyrroloquinoline quinone biosynthesis. Functionally, may be involved in the transport of PQQ or its precursor to the periplasm. The protein is Coenzyme PQQ synthesis protein B of Nitrosococcus oceani (strain ATCC 19707 / BCRC 17464 / JCM 30415 / NCIMB 11848 / C-107).